A 202-amino-acid polypeptide reads, in one-letter code: LexA repressor (202 aa).

Residues Arg-28 to Lys-48 constitute a DNA-binding region (H-T-H motif). Catalysis depends on for autocatalytic cleavage activity residues Ser-119 and Lys-156.

Belongs to the peptidase S24 family. As to quaternary structure, homodimer.

The enzyme catalyses Hydrolysis of Ala-|-Gly bond in repressor LexA.. Represses a number of genes involved in the response to DNA damage (SOS response), including recA and lexA. Binds to the 16 bp palindromic sequence 5'-CTGTATATATATACAG-3'. In the presence of single-stranded DNA, RecA interacts with LexA causing an autocatalytic cleavage which disrupts the DNA-binding part of LexA, leading to derepression of the SOS regulon and eventually DNA repair. The sequence is that of LexA repressor from Enterobacter sp. (strain 638).